We begin with the raw amino-acid sequence, 315 residues long: MARRTKGRNIDGIVLLDKPTGMSSNHALQRVKRIYNASKAGHTGALDPLATGMLPVCLGEATKFSQHLLDADKRYLVTAKLGQRTDTSDSDGEVVSERPLNFTQEALDAALDSFRGDTLQVPSMFSALKYQGQPLYKYAREGKEVPREARPITVFELNFIKLEGDELTLDIHCSKGTYIRTIIDDLGEKLGCGAHVIMLRRTAVAGYPYERMVTIEALEALLEQAEKEGVEPKTLLDPLLLPMDTAVANFPEVNIPDAVAPYLMNGNPVRVAGVSSDSLLRITLGEARRFVGVGAINDDGLLAPKRLVVFYDDEA.

Asp47 serves as the catalytic Nucleophile.

It belongs to the pseudouridine synthase TruB family. Type 1 subfamily.

The catalysed reaction is uridine(55) in tRNA = pseudouridine(55) in tRNA. In terms of biological role, responsible for synthesis of pseudouridine from uracil-55 in the psi GC loop of transfer RNAs. The polypeptide is tRNA pseudouridine synthase B (Shewanella amazonensis (strain ATCC BAA-1098 / SB2B)).